Here is a 311-residue protein sequence, read N- to C-terminus: HPr kinase/phosphorylase (311 aa).

Catalysis depends on residues H139 and K160. 154-161 is a binding site for ATP; the sequence is GQSGVGKS. Residue S161 coordinates Mg(2+). D178 (proton acceptor; for phosphorylation activity. Proton donor; for dephosphorylation activity) is an active-site residue. Residues 202-211 are important for the catalytic mechanism of both phosphorylation and dephosphorylation; the sequence is LEIRGIGIID. Residue E203 participates in Mg(2+) binding. R244 is a catalytic residue. The tract at residues 265-270 is important for the catalytic mechanism of dephosphorylation; sequence PVRPGR.

The protein belongs to the HPrK/P family. Homohexamer. Mg(2+) is required as a cofactor.

The enzyme catalyses [HPr protein]-L-serine + ATP = [HPr protein]-O-phospho-L-serine + ADP + H(+). The catalysed reaction is [HPr protein]-O-phospho-L-serine + phosphate + H(+) = [HPr protein]-L-serine + diphosphate. In terms of biological role, catalyzes the ATP- as well as the pyrophosphate-dependent phosphorylation of a specific serine residue in HPr, a phosphocarrier protein of the phosphoenolpyruvate-dependent sugar phosphotransferase system (PTS). HprK/P also catalyzes the pyrophosphate-producing, inorganic phosphate-dependent dephosphorylation (phosphorolysis) of seryl-phosphorylated HPr (P-Ser-HPr). The two antagonistic activities of HprK/P are regulated by several intracellular metabolites, which change their concentration in response to the absence or presence of rapidly metabolisable carbon sources (glucose, fructose, etc.) in the growth medium. Therefore, by controlling the phosphorylation state of HPr, HPrK/P is a sensor enzyme that plays a major role in the regulation of carbon metabolism and sugar transport: it mediates carbon catabolite repression (CCR), and regulates PTS-catalyzed carbohydrate uptake and inducer exclusion. The protein is HPr kinase/phosphorylase of Exiguobacterium sp. (strain ATCC BAA-1283 / AT1b).